The chain runs to 244 residues: tRNA pseudouridine synthase A (244 aa).

Asp-53 (nucleophile) is an active-site residue. Tyr-111 contacts substrate.

The protein belongs to the tRNA pseudouridine synthase TruA family. In terms of assembly, homodimer.

The enzyme catalyses uridine(38/39/40) in tRNA = pseudouridine(38/39/40) in tRNA. Functionally, formation of pseudouridine at positions 38, 39 and 40 in the anticodon stem and loop of transfer RNAs. In Bacillus sp. (strain KSM-64), this protein is tRNA pseudouridine synthase A.